The primary structure comprises 1479 residues: C-type mannose receptor 2 (1479 aa).

The first 30 residues, 1 to 30 (MGPGRPAPAPWPRHLLRCVLLLGCLHLGRP), serve as a signal peptide directing secretion. Residues 31 to 1414 (GAPGDAALPE…PSALPENPAA (1384 aa)) are Extracellular-facing. A Ricin B-type lectin domain is found at 41-167 (PNVFLIFSHG…WRIYGSEEDL (127 aa)). The cysteines at positions 54 and 68 are disulfide-linked. Asn69 is a glycosylation site (N-linked (GlcNAc...) (complex) asparagine). A disulfide bridge connects residues Cys93 and Cys112. An N-linked (GlcNAc...) asparagine glycan is attached at Asn140. The region spanning 182–230 (SHGKPCTIPFKYDNQWFHGCTSTGREDGHLWCATTQDYGKDERWGFCPI) is the Fibronectin type-II domain. Disulfide bonds link Cys187/Cys213, Cys201/Cys228, Cys266/Cys359, and Cys335/Cys351. Residues 244-360 (LTDSCYQFNF…CSIALPYVCK (117 aa)) enclose the C-type lectin 1 domain. Asn364 carries N-linked (GlcNAc...) asparagine glycosylation. 4 C-type lectin domains span residues 389-505 (FQGH…SICK), 528-644 (HSPS…RYIC), 678-809 (KLRY…WICK), and 832-951 (FQEA…YICK). 2 disulfides stabilise this stretch: Cys410–Cys504 and Cys481–Cys496. Asn588 carries N-linked (GlcNAc...) asparagine glycosylation. Intrachain disulfides connect Cys618-Cys635, Cys704-Cys808, Cys785-Cys800, Cys853-Cys950, and Cys927-Cys942. Asn954 and Asn1029 each carry an N-linked (GlcNAc...) asparagine glycan. C-type lectin domains lie at 979-1107 (FLNK…GFIC), 1132-1243 (YLNG…GAVC), and 1273-1393 (FREH…GVVC). Cys1078 and Cys1098 are joined by a disulfide. Residue Lys1142 forms a Glycyl lysine isopeptide (Lys-Gly) (interchain with G-Cter in SUMO1) linkage. Cys1220 and Cys1234 are oxidised to a cystine. The N-linked (GlcNAc...) asparagine glycan is linked to Asn1350. Cys1369 and Cys1384 form a disulfide bridge. A helical membrane pass occupies residues 1415–1435 (LVVVLMAVLLLLALLTAALIL). Residues 1436–1479 (YRRRQSIERGAFEGARYSRSSSSPTEATEKNILVSDMEMNEQQE) lie on the Cytoplasmic side of the membrane. Residues 1450–1479 (ARYSRSSSSPTEATEKNILVSDMEMNEQQE) form a disordered region.

Interacts with C-terminal region of type I collagen/COL1A1. Interacts directly with PLAUR/UPAR and PLAU/pro-UPA to form a tri-molecular complex. Interacts with collagen V. In terms of processing, N-glycosylated. Ubiquitous with low expression in brain, placenta, lung, kidney, pancreas, spleen, thymus and colon. Expressed in endothelial cells, fibroblasts and macrophages. Highly expressed in fetal lung and kidney.

The protein localises to the membrane. May play a role as endocytotic lectin receptor displaying calcium-dependent lectin activity. Internalizes glycosylated ligands from the extracellular space for release in an endosomal compartment via clathrin-mediated endocytosis. May be involved in plasminogen activation system controlling the extracellular level of PLAUR/PLAU, and thus may regulate protease activity at the cell surface. May contribute to cellular uptake, remodeling and degradation of extracellular collagen matrices. May play a role during cancer progression as well as in other chronic tissue destructive diseases acting on collagen turnover. May participate in remodeling of extracellular matrix cooperating with the matrix metalloproteinases (MMPs). The sequence is that of C-type mannose receptor 2 (MRC2) from Homo sapiens (Human).